Reading from the N-terminus, the 597-residue chain is Elongation factor 4 (597 aa).

In terms of domain architecture, tr-type G spans 2 to 184; sequence KNIRNFSIIA…EIVAKIPAPT (183 aa). Residues 14–19 and 131–134 contribute to the GTP site; these read DHGKST and NKID.

This sequence belongs to the TRAFAC class translation factor GTPase superfamily. Classic translation factor GTPase family. LepA subfamily.

It localises to the cell inner membrane. It carries out the reaction GTP + H2O = GDP + phosphate + H(+). Functionally, required for accurate and efficient protein synthesis under certain stress conditions. May act as a fidelity factor of the translation reaction, by catalyzing a one-codon backward translocation of tRNAs on improperly translocated ribosomes. Back-translocation proceeds from a post-translocation (POST) complex to a pre-translocation (PRE) complex, thus giving elongation factor G a second chance to translocate the tRNAs correctly. Binds to ribosomes in a GTP-dependent manner. The polypeptide is Elongation factor 4 (Neisseria gonorrhoeae (strain ATCC 700825 / FA 1090)).